Reading from the N-terminus, the 209-residue chain is Urease accessory protein UreG (209 aa).

Residue Gly16–Thr23 participates in GTP binding.

The protein belongs to the SIMIBI class G3E GTPase family. UreG subfamily. As to quaternary structure, homodimer. UreD, UreF and UreG form a complex that acts as a GTP-hydrolysis-dependent molecular chaperone, activating the urease apoprotein by helping to assemble the nickel containing metallocenter of UreC. The UreE protein probably delivers the nickel.

It is found in the cytoplasm. Functionally, facilitates the functional incorporation of the urease nickel metallocenter. This process requires GTP hydrolysis, probably effectuated by UreG. The polypeptide is Urease accessory protein UreG (Blochmanniella floridana).